A 417-amino-acid polypeptide reads, in one-letter code: Histidine--tRNA ligase (417 aa).

The protein belongs to the class-II aminoacyl-tRNA synthetase family. As to quaternary structure, homodimer.

The protein localises to the cytoplasm. It catalyses the reaction tRNA(His) + L-histidine + ATP = L-histidyl-tRNA(His) + AMP + diphosphate + H(+). This Caldanaerobacter subterraneus subsp. tengcongensis (strain DSM 15242 / JCM 11007 / NBRC 100824 / MB4) (Thermoanaerobacter tengcongensis) protein is Histidine--tRNA ligase.